The chain runs to 513 residues: ATP synthase subunit alpha (513 aa).

Glycine 169–threonine 176 contributes to the ATP binding site.

The protein belongs to the ATPase alpha/beta chains family. In terms of assembly, F-type ATPases have 2 components, CF(1) - the catalytic core - and CF(0) - the membrane proton channel. CF(1) has five subunits: alpha(3), beta(3), gamma(1), delta(1), epsilon(1). CF(0) has three main subunits: a(1), b(2) and c(9-12). The alpha and beta chains form an alternating ring which encloses part of the gamma chain. CF(1) is attached to CF(0) by a central stalk formed by the gamma and epsilon chains, while a peripheral stalk is formed by the delta and b chains.

Its subcellular location is the cell inner membrane. It carries out the reaction ATP + H2O + 4 H(+)(in) = ADP + phosphate + 5 H(+)(out). Functionally, produces ATP from ADP in the presence of a proton gradient across the membrane. The alpha chain is a regulatory subunit. This is ATP synthase subunit alpha from Histophilus somni (strain 2336) (Haemophilus somnus).